The primary structure comprises 189 residues: FAS1 domain-containing protein mug57 (189 aa).

Positions 1-24 are cleaved as a signal peptide; the sequence is MMKLFCLNIFRFLYTTSFISAVLS. Residues 37 to 182 form the FAS1 domain; sequence EPRLFELLAE…GEMWVLNATL (146 aa).

The protein localises to the cytoplasm. The protein resides in the nucleus. It localises to the membrane. Functionally, has a role in sporulation. The sequence is that of FAS1 domain-containing protein mug57 (mug57) from Schizosaccharomyces pombe (strain 972 / ATCC 24843) (Fission yeast).